The primary structure comprises 455 residues: MGLFGLTRFIHEHKLVKPSIISTPPGVLTPVAVDVWNVMYTLLERLYPVGKRENLHGPSVTIHCLGVLLRLLTQRSYYPIFVLERCTDGPLSRGAKAIMSRAMNHDERGTSDLTRVLLSSNTSCSIKYNKTSETYDSVFRNSSTSCIPSEENKSQDMFLDGCPRQTDKTICLRDQNVCSLTSTMPSRGHPNHRLYHKLCASLIRWMGYAYVEAVDIEADEACANLFHTRTVALVYTTDTDLLFMGCDILLDAIPMFAPVVRCRDLLQYLGITYPEFLVAFVRCQTDLHTSDNLKSVQQVIQDTGLKVPHQMDTSTRSPTYDSWRHGEVFKSLTVATSGKTENGVSVSKYASNRSEVTVDASWALNLLPPSSSPLDNLERAFVEHIIAVVTPLTRGRLKLMKRVNIMQNTADPYMVINTLYHNLKGEKMARQYARIFKQFIPTPLPLNTVLTKYWN.

This sequence belongs to the herpesviridae VHS protein family.

Its subcellular location is the virion. In terms of biological role, minor structural protein that acts as an endoribonuclease during lytic infection. Degrades host mRNAs in the cytoplasm by cutting them at preferred sites, including some in regions of translation initiation. This Homo sapiens (Human) protein is Virion host shutoff protein (17).